The chain runs to 428 residues: GTPase Obg (428 aa).

Positions 1–158 (MFIDKAKVFI…LSIVLELKLL (158 aa)) constitute an Obg domain. Residues 159–331 (ADVGLLGFPN…VIKEAARMLK (173 aa)) form the OBG-type G domain. Residues 165–172 (GFPNVGKS), 190–194 (FTTLK), 212–215 (DIPG), 282–285 (NKSD), and 312–314 (SAA) contribute to the GTP site. Residues Ser172 and Thr192 each contribute to the Mg(2+) site. The 84-residue stretch at 345 to 428 (MYIPEEKRFT…LNDFEFEYLL (84 aa)) folds into the OCT domain.

Belongs to the TRAFAC class OBG-HflX-like GTPase superfamily. OBG GTPase family. As to quaternary structure, monomer. Mg(2+) serves as cofactor.

The protein localises to the cytoplasm. An essential GTPase which binds GTP, GDP and possibly (p)ppGpp with moderate affinity, with high nucleotide exchange rates and a fairly low GTP hydrolysis rate. Plays a role in control of the cell cycle, stress response, ribosome biogenesis and in those bacteria that undergo differentiation, in morphogenesis control. The polypeptide is GTPase Obg (Clostridium botulinum (strain Eklund 17B / Type B)).